The following is a 940-amino-acid chain: Insulin receptor substrate 1 (940 aa).

The region spanning 8 to 109 (GMVLSGYHKK…WLDKLLLLQR (102 aa)) is the PH domain. The IRS-type PTB domain maps to 122–236 (YEHVWQVIIQ…SAMSAKTDSN (115 aa)). A phosphoserine mark is found at S284, S285, and S340. Y407 bears the Phosphotyrosine; by INSR mark. The YXXM motif 1 motif lies at 407–410 (YIPM). Residues 523–540 (NRSQNNISKEGPISGTST) are compositionally biased toward polar residues. Residues 523–549 (NRSQNNISKEGPISGTSTNREKKSTSA) form a disordered region. Phosphoserine is present on S548. Residues 639–642 (YLEM) carry the YXXM motif 2 motif. A Phosphotyrosine; by INSR modification is found at Y883. Residues 895–915 (NPAKYLKRGSRESPPVATCAE) are disordered. Phosphoserine occurs at positions 904 and 907. Y920 is modified (phosphotyrosine; by INSR).

As to quaternary structure, bindings to phosphatidylinositol 3-kinase and SHP2.

Its function is as follows. Activates phosphatidylinositol 3-kinase when bound to the regulatory p85 subunit. May mediate the control of various cellular processes by insulin-like peptides. When phosphorylated by the insulin receptor binds specifically to various cellular proteins containing SH2 domains. Involved in control of cell proliferation, cell size, and body and organ growth throughout development. Also has a role in a signaling pathway controlling the physiological response required to endure periods of low nutrient conditions. Insulin/insulin-like growth factor (IGF) signaling pathway has a role in regulating aging and is necessary in the ovary for vitellogenic maturation. This Drosophila ananassae (Fruit fly) protein is Insulin receptor substrate 1.